The chain runs to 553 residues: Membrane protein insertase YidC (553 aa).

5 consecutive transmembrane segments (helical) span residues 7–24 (VLWV…DNWQ), 365–385 (WGWA…PLSA), 435–455 (LPVV…LASV), 474–494 (PYFI…SLNP), and 509–529 (PIAF…YYVV).

This sequence belongs to the OXA1/ALB3/YidC family. Type 1 subfamily. Interacts with the Sec translocase complex via SecD. Specifically interacts with transmembrane segments of nascent integral membrane proteins during membrane integration.

Its subcellular location is the cell inner membrane. Functionally, required for the insertion and/or proper folding and/or complex formation of integral membrane proteins into the membrane. Involved in integration of membrane proteins that insert both dependently and independently of the Sec translocase complex, as well as at least some lipoproteins. Aids folding of multispanning membrane proteins. This Burkholderia multivorans (strain ATCC 17616 / 249) protein is Membrane protein insertase YidC.